The chain runs to 1319 residues: MLDVNFFDELRIGLASADDIRNWSFGEVKKPETINYRTLKPEKDGLFCEKIFGPTRDWECYCGKYKRVRFKGIICERCGVEVTRAKVRRERMGHIELAAPVTHIWYFKGVPSRLGYLLDLAPKDLEKIIYFAAYVITAVDDELRHNELSTLEAEMEVEKKAVADQRDADLEARAQKLEADLAELEAEGAKSDVRRKVRDGGEREMRQLRDRSQRELDRLDEIWTTFTKLAPKQLIVDEVLYRELVDRYGEYFTGAMGAEAVQKLIQNFDLDAEAENLRETIRSGKGQKKLRALKRLKVVAAFQNSTNSPGGMVLDAVPVIPPELRPMVQLDGGRFATSDLNDLYRRVINRNNRLKRLIDLGAPEIIVNNEKRMLQESVDALFDNGRRGRPVTGPGNRPLKSLSDLLKGKQGRFRQNLLGKRVDYSGRSVIVVGPQLKLHQCGLPKLMALELFKPFVMKRLVDLNHAQNIKSAKRMVERQRAQVWDVLEEVIAEHPVLLNRAPTLHRLGIQAFEPQLVEGKAIQLHPLVCEAFNADFDGDQMAVHLPLSAEAQAEARILMLSSNNILSPASGRPLAMPRLDMVTGLYFLTTEIPGDIGAHAPAGKDQPEVGVYSSPAEAIMAMDRGALSVRAPIRVRLTQQRPPAEVEAELFENGWQPGDAWVAETTLGRVLFNELLPHGYPFVNKQMHKKVQSAIINDLAERFPMIVVAQTVDKLKDAGFHWATRSGVTVSMADVLVPPQKAEILDRYEKEAERIEKQYQRGALNQQERRDALVKIWQEATDEVGKALEEHYPADNPITLLPKSGATGNMTQVRNLAGMKGLVTNPKGEYIPRPIKSSFREGLTVLEYFINTHGARKGLADTALRTADSGYLTRRLVDVSQDVIVREHDCGTERGINVVIAEKQTGPDGKATLIRDAHIETSAYARTLAADAVDADGNVLVERGHDLGDPAIEKLLAAGVTTVKVRSVLTCTTGTGVCAMCYGRSMATGKLVDIGEAAGIVAAQSIGEPGTQLTMRTFHQGGVGDDITGGLPRVTELFEARVPKGKAPIADVTGRVRLEEGERFYKITIVPDDGGEEVVYDKLSKRQRLRVFKHEDGSERPLADGDHVEVGQQLMEGAADPHEVLRVMGPRQVQVHLVNEVQEVYRSQGVSIHDKHIEVIVRQMLRRVTIIDSGATEFLPGSLTERAEFESENRRVVAEGGEPAAGRPVLMGITKASLATDSWLSAASFQETTRVLTDAAINCRSDKLNGLKENVIIGKLIPAGTGINRYRNISVQPTEEARAAAYTIPSYEDQYYSPDFGSNTGAAVPLDDYGYSDYR.

Zn(2+)-binding residues include cysteine 60, cysteine 62, cysteine 75, and cysteine 78. Positions 535, 537, and 539 each coordinate Mg(2+). Zn(2+)-binding residues include cysteine 890, cysteine 971, cysteine 978, and cysteine 981.

It belongs to the RNA polymerase beta' chain family. The RNAP catalytic core consists of 2 alpha, 1 beta, 1 beta' and 1 omega subunit. When a sigma factor is associated with the core the holoenzyme is formed, which can initiate transcription. The cofactor is Mg(2+). Zn(2+) is required as a cofactor.

The catalysed reaction is RNA(n) + a ribonucleoside 5'-triphosphate = RNA(n+1) + diphosphate. DNA-dependent RNA polymerase catalyzes the transcription of DNA into RNA using the four ribonucleoside triphosphates as substrates. The sequence is that of DNA-directed RNA polymerase subunit beta' from Mycobacteroides abscessus (strain ATCC 19977 / DSM 44196 / CCUG 20993 / CIP 104536 / JCM 13569 / NCTC 13031 / TMC 1543 / L948) (Mycobacterium abscessus).